We begin with the raw amino-acid sequence, 622 residues long: MCGLQFSLPCLRLFLVVTCYLLLLLHKEILGCSSVCQLCTGRQINCRNLGLSSIPKNFPESTVFLYLTGNNISYINESELTGLHSLVALYLDNSNILYVYPKAFVQLRHLYFLFLNNNFIKRLDPGIFKGLLNLRNLYLQYNQVSFVPRGVFNDLVSVQYLNLQRNRLTVLGSGTFVGMVALRILDLSNNNILRISESGFQHLENLACLYLGSNNLTKVPSNAFEVLKSLRRLSLSHNPIEAIQPFAFKGLANLEYLLLKNSRIRNVTRDGFSGINNLKHLILSHNDLENLNSDTFSLLKNLIYLKLDRNRIISIDNDTFENMGASLKILNLSFNNLTALHPRVLKPLSSLIHLQANSNPWECNCKLLGLRDWLASSAITLNIYCQNPPSMRGRALRYINITNCVTSSINVSRAWAVVKSPHIHHKTTALMMAWHKVTTNGSPLENTETENITFWERIPTSPAGRFFQENAFGNPLETTAVLPVQIQLTTSVTLNLEKNSALPNDAASMSGKTSLICTQEVEKLNEAFDILLAFFILACVLIIFLIYKVVQFKQKLKASENSRENRLEYYSFYQSARYNVTASICNTSPNSLESPGLEQIRLHKQIVPENEAQVILFEHSAL.

An N-terminal signal peptide occupies residues 1-31 (MCGLQFSLPCLRLFLVVTCYLLLLLHKEILG). In terms of domain architecture, LRRNT spans 32 to 60 (CSSVCQLCTGRQINCRNLGLSSIPKNFPE). 12 LRR repeats span residues 61–82 (STVFLYLTGNNISYINESELTG), 85–106 (SLVALYLDNSNILYVYPKAFVQ), 109–130 (HLYFLFLNNNFIKRLDPGIFKG), 133–154 (NLRNLYLQYNQVSFVPRGVFND), 157–178 (SVQYLNLQRNRLTVLGSGTFVG), 181–202 (ALRILDLSNNNILRISESGFQH), 205–226 (NLACLYLGSNNLTKVPSNAFEV), 229–250 (SLRRLSLSHNPIEAIQPFAFKG), 253–274 (NLEYLLLKNSRIRNVTRDGFSG), 277–298 (NLKHLILSHNDLENLNSDTFSL), 301–322 (NLIYLKLDRNRIISIDNDTFEN), and 326–347 (SLKILNLSFNNLTALHPRVLKP). N-linked (GlcNAc...) asparagine glycosylation occurs at Asn-215. N-linked (GlcNAc...) asparagine glycosylation occurs at Asn-266. 2 N-linked (GlcNAc...) asparagine glycosylation sites follow: Asn-331 and Asn-400. The LRRCT domain maps to 359–406 (NPWECNCKLLGLRDWLASSAITLNIYCQNPPSMRGRALRYINITNCVT). The helical transmembrane segment at 527 to 547 (AFDILLAFFILACVLIIFLIY) threads the bilayer.

As to expression, expressed at low levels in many tissues, including smooth muscle, brain, uterus, pancreas, cartilage, adipose, spleen and testis.

Its subcellular location is the membrane. In terms of biological role, renders cells highly sensitive to the activation by cytokines and lipopolysaccharide (LPS). The protein is Leucine-rich repeat-containing protein 70 (LRRC70) of Homo sapiens (Human).